Reading from the N-terminus, the 123-residue chain is Chondroitin proteoglycan 8 (123 aa).

Residues 1 to 16 (MRPFILLALLFSVAIA) form the signal peptide. A disordered region spans residues 32–123 (SVRRSTRGAD…SGSGDEAPAE (92 aa)). The span at 38–60 (RGADKKADSSDSSDSNEKDDKVT) shows a compositional bias: basic and acidic residues. Residues Ser-63 and Ser-65 are each glycosylated (O-linked (Xyl...) (chondroitin sulfate) serine). The segment covering 74–84 (EQLRRVARDVE) has biased composition (basic and acidic residues). O-linked (Xyl...) (chondroitin sulfate) serine glycans are attached at residues Ser-87, Ser-93, and Ser-114.

The chain is Chondroitin proteoglycan 8 (cpg-8) from Caenorhabditis briggsae.